Consider the following 277-residue polypeptide: MSVPTVLERIIARKFQEVAERSARVSLAELEGLAKAADAPRGFANALIEQAKRKQPAVIAEIKKASPSKGVIREHFVPAEIAVSYEKGGATCLSVLTDVDYFQGADEYLQQARAAVSLPVIRKDFMVDPYQIVEARALGADCVLLIVSALDDVKMAELAATAKDVGLDVLVEVHDGDELERALKTLDTPLVGVNNRNLHTFEVSLETTLDLLPRIPRDRLAITESGILNRADVELMAINEVYSFLVGEAFMRAEQPGLELQRLFFPEQVKKTVQQLD.

The protein belongs to the TrpC family.

The enzyme catalyses 1-(2-carboxyphenylamino)-1-deoxy-D-ribulose 5-phosphate + H(+) = (1S,2R)-1-C-(indol-3-yl)glycerol 3-phosphate + CO2 + H2O. It functions in the pathway amino-acid biosynthesis; L-tryptophan biosynthesis; L-tryptophan from chorismate: step 4/5. The chain is Indole-3-glycerol phosphate synthase from Pseudomonas putida (strain ATCC 700007 / DSM 6899 / JCM 31910 / BCRC 17059 / LMG 24140 / F1).